The sequence spans 110 residues: UPF0213 protein DP2720 (110 aa).

Residues 12 to 88 (PAWFVYIVQC…KQLSPTRKRT (77 aa)) form the GIY-YIG domain.

Belongs to the UPF0213 family.

The sequence is that of UPF0213 protein DP2720 from Desulfotalea psychrophila (strain LSv54 / DSM 12343).